Reading from the N-terminus, the 41-residue chain is Divisome-associated membrane protein Blr (41 aa).

Topologically, residues 1–3 (MNR) are cytoplasmic. A helical membrane pass occupies residues 4–24 (LIELTGWIVLVVSVILLGVAS). At 25–41 (HIDNYQPPEQSASVQHK) the chain is on the periplasmic side.

As to quaternary structure, interacts with FtsL and several other divisomal proteins, including FtsI, FtsK, FtsN, FtsQ, FtsW and YmgF. Post-translationally, the N-terminus is blocked.

Its subcellular location is the cell inner membrane. Its function is as follows. Component of the cell division machinery, which is probably involved in the stabilization of the divisome under certain stress conditions. The polypeptide is Divisome-associated membrane protein Blr (blr) (Escherichia coli (strain K12)).